The sequence spans 37 residues: Cytochrome b6-f complex subunit 5 (37 aa).

Residues 5 to 25 traverse the membrane as a helical segment; that stretch reads LLSGIVLGLVPVTIAGLFVTA.

This sequence belongs to the PetG family. In terms of assembly, the 4 large subunits of the cytochrome b6-f complex are cytochrome b6, subunit IV (17 kDa polypeptide, PetD), cytochrome f and the Rieske protein, while the 4 small subunits are PetG, PetL, PetM and PetN. The complex functions as a dimer.

It is found in the plastid. The protein localises to the chloroplast thylakoid membrane. In terms of biological role, component of the cytochrome b6-f complex, which mediates electron transfer between photosystem II (PSII) and photosystem I (PSI), cyclic electron flow around PSI, and state transitions. PetG is required for either the stability or assembly of the cytochrome b6-f complex. This chain is Cytochrome b6-f complex subunit 5, found in Stigeoclonium helveticum (Green alga).